We begin with the raw amino-acid sequence, 814 residues long: MGKIGIVFFASLLFLLIIFPSCAFAAITRASPLSIGQTLSSPNGTYELGFFSPNNSRNQYVGIWFKNITPRVVVWVANRDKPVTNNAANLTINSNGSLILVEREQNVVWSIGETFSSNELRAELLENGNLVLIDGVSERNLWESFEHLGDTMLLESSVMYDVPNNKKRVLSSWKNPTDPSPGEFVAELTTQVPPQGFIMRGSRPYWRGGPWARVRFTGIPEMDGSHVSKFDISQDVAAGTGSLTYSLERRNSNLSYTTLTSAGSLKIIWNNGSGWVTDLEAPVSSCDVYNTCGPFGLCIRSNPPKCECLKGFVPKSDEEWNKRNWTGGCMRRTNLSCDVNSSATAQANNGDIFDIVANVKPPDFYEYLSLINEEDCQQRCLGNCSCTAFSYIEQIGCLVWNRELVDVMQFVAGGETLSIRLASSELAGSNRVKIIVASIVSISVFMILVFASYWYWRYKAKQNDSNPIPLETSQDAWREQLKPQDVNFFDMQTILTITNNFSMENKLGQGGFGPVYKGNLQDGKEIAIKRLSSTSGQGLEEFMNEIILISKLQHRNLVRLLGCCIEGEEKLLIYEFMANKSLNTFIFDSTKKLELDWPKRFEIIQGIACGLLYLHRDSCLRVVHRDMKVSNILLDEEMNPKISDFGLARMFQGTQHQANTRRVVGTLGYMSPEYAWTGMFSEKSDIYAFGVLLLEIITGKRISSFTIGEEGKTLLEFAWDSWCESGGSDLLDQDISSSGSESEVARCVQIGLLCIQQQAGDRPNIAQVMSMLTTTMDLPKPKQPVFAMQVQESDSESKTMYSVNNITQTAIVGR.

The signal sequence occupies residues 1–25 (MGKIGIVFFASLLFLLIIFPSCAFA). Residues 26–145 (AITRASPLSI…VSERNLWESF (120 aa)) enclose the Bulb-type lectin domain. Over 26 to 433 (AITRASPLSI…SELAGSNRVK (408 aa)) the chain is Extracellular. 6 N-linked (GlcNAc...) asparagine glycosylation sites follow: Asn-43, Asn-54, Asn-89, Asn-95, Asn-253, and Asn-271. The region spanning 282–318 (PVSSCDVYNTCGPFGLCIRSNPPKCECLKGFVPKSDE) is the EGF-like domain. 2 cysteine pairs are disulfide-bonded: Cys-286/Cys-298 and Cys-292/Cys-306. Asn-324, Asn-334, Asn-340, and Asn-383 each carry an N-linked (GlcNAc...) asparagine glycan. The PAN domain maps to 337–423 (CDVNSSATAQ…GETLSIRLAS (87 aa)). Disulfide bonds link Cys-376–Cys-397 and Cys-380–Cys-386. Residues 434–454 (IIVASIVSISVFMILVFASYW) traverse the membrane as a helical segment. The Cytoplasmic segment spans residues 455–814 (YWRYKAKQND…NITQTAIVGR (360 aa)). The region spanning 501–786 (FSMENKLGQG…DLPKPKQPVF (286 aa)) is the Protein kinase domain. ATP contacts are provided by residues 507–515 (LGQGGFGPV) and Lys-529. A phosphoserine mark is found at Ser-535 and Ser-550. Residues 590–607 (TKKLELDWPKRFEIIQGI) are caM-binding. The active-site Proton acceptor is the Asp-626. Phosphoserine occurs at positions 630 and 643. A Phosphothreonine modification is found at Thr-660. Phosphoserine occurs at positions 703, 704, 797, and 802. Thr-809 bears the Phosphothreonine mark.

It belongs to the protein kinase superfamily. Ser/Thr protein kinase family.

It is found in the cell membrane. The enzyme catalyses L-seryl-[protein] + ATP = O-phospho-L-seryl-[protein] + ADP + H(+). It catalyses the reaction L-threonyl-[protein] + ATP = O-phospho-L-threonyl-[protein] + ADP + H(+). This chain is G-type lectin S-receptor-like serine/threonine-protein kinase At1g61370, found in Arabidopsis thaliana (Mouse-ear cress).